Consider the following 264-residue polypeptide: O-methyltransferase resE (264 aa).

Residues Gln-97 and His-142 each contribute to the S-adenosyl-L-methionine site.

It belongs to the methyltransferase superfamily.

The enzyme catalyses desmethylrestrictinol + S-adenosyl-L-methionine = restrictinol + S-adenosyl-L-homocysteine + H(+). It participates in antifungal biosynthesis. Functionally, O-methyltransferase; part of the gene cluster that mediates the biosynthesis of the tetrahydropyranyl antifungal agent restricticin that acts as an inhibitor of CYP51 and blocks the ergosterol biosynthesis. Within the pathway, resE uses S-adenosylmethionine to methylate position C4 of desmethylrestrictinol to produce restrictinol. The highly reducing polyketide synthase resH, the short chain dehydrogenase resG, the cyclase resF, the FAD-dependent monooxygenase resA and the enoylreductase resD are required to generate the first stable intermediate desmethylrestrictinol. ResH with resD biosynthesize the first polyketide chain intermediate that is reduced by resG, followed by epoxidation by resA before 6-endo cyclization via epoxide opening by resF leads to desmethylrestrictinol. The methyltransferase resE then catalyzes the C4 O-methylation of desmethylrestrictinol to produce restrictinol, and the nonribosomal peptide synthetase resC catalyzes the C3 esterification of restrictinol with glycine that leads to restricticin. The chain is O-methyltransferase resE from Aspergillus sclerotiorum.